The chain runs to 691 residues: Elongation factor G (691 aa).

Positions 10–284 constitute a tr-type G domain; that stretch reads KRLRNIGIAA…AVVDYLPSPL (275 aa). GTP-binding positions include 19-26, 83-87, and 137-140; these read AHIDAGKT, DTPGH, and NKMD.

The protein belongs to the TRAFAC class translation factor GTPase superfamily. Classic translation factor GTPase family. EF-G/EF-2 subfamily.

It localises to the cytoplasm. Catalyzes the GTP-dependent ribosomal translocation step during translation elongation. During this step, the ribosome changes from the pre-translocational (PRE) to the post-translocational (POST) state as the newly formed A-site-bound peptidyl-tRNA and P-site-bound deacylated tRNA move to the P and E sites, respectively. Catalyzes the coordinated movement of the two tRNA molecules, the mRNA and conformational changes in the ribosome. This is Elongation factor G (fusA) from Thermus thermophilus (strain ATCC 27634 / DSM 579 / HB8).